The sequence spans 485 residues: Proline--tRNA ligase (485 aa).

It belongs to the class-II aminoacyl-tRNA synthetase family. ProS type 3 subfamily. Homodimer.

The protein localises to the cytoplasm. It carries out the reaction tRNA(Pro) + L-proline + ATP = L-prolyl-tRNA(Pro) + AMP + diphosphate. In terms of biological role, catalyzes the attachment of proline to tRNA(Pro) in a two-step reaction: proline is first activated by ATP to form Pro-AMP and then transferred to the acceptor end of tRNA(Pro). The polypeptide is Proline--tRNA ligase (Aeropyrum pernix (strain ATCC 700893 / DSM 11879 / JCM 9820 / NBRC 100138 / K1)).